The primary structure comprises 784 residues: Toll-like receptor 2 (784 aa).

Residues 1–20 (MPHTLWMVWVLGVIISLSKE) form the signal peptide. Residues 21–587 (ESSNQASLSC…VRLSVSECHR (567 aa)) are Extracellular-facing. A disulfide bridge links Cys30 with Cys36. 19 LRR repeats span residues 54–77 (VKCL…RYVN), 78–101 (LQAL…SLGR), 102–125 (LEHL…PLSS), 126–150 (LKFL…HLTK), 151–175 (LRIL…GLTF), 176–199 (LEEL…SIQN), 200–223 (VSHL…LTSS), 224–250 (VECL…TNSL), 251–278 (IKKF…QISG), 279–308 (LLEL…DPGK), 309–337 (VETL…LTER), 338–361 (VKRI…HLKS), 362–388 (LEYL…AWPS), 389–414 (LQTL…TLKN), 415–437 (LTNL…WPEK), 438–457 (MKYL…CIPK), 458–478 (TLEI…NLPQ), 479–500 (LKEL…LLPM), and 501–524 (LLVL…SFHT). Asn114 is a glycosylation site (N-linked (GlcNAc...) asparagine). N-linked (GlcNAc...) asparagine glycosylation is present at Asn199. A disulfide bridge connects residues Cys353 and Cys382. N-linked (GlcNAc...) asparagine glycosylation occurs at Asn414. A disulfide bond links Cys432 and Cys454. Residue Asn442 is glycosylated (N-linked (GlcNAc...) asparagine). Positions 525–579 (LKTLEAGGNNFICSCEFLSFTQEQQALAKVLVDWPANYLCDSPSHVRGQRVQDVR) constitute an LRRCT domain. A helical transmembrane segment spans residues 588 to 608 (AALVSGMCCALFLLILLMGVL). Residues 609–784 (CHRFHGLWYM…WVNLRAAIKS (176 aa)) are Cytoplasmic-facing. The TIR domain occupies 639–782 (ICYDAFVSYS…GFWVNLRAAI (144 aa)). Lys754 participates in a covalent cross-link: Glycyl lysine isopeptide (Lys-Gly) (interchain with G-Cter in ubiquitin). The ATG16L1-binding motif signature appears at 761–778 (YLEWPMDEARQEGFWVNL).

Belongs to the Toll-like receptor family. In terms of assembly, interacts with LY96, TLR1 and TLR6 (via extracellular domain). TLR2 seems to exist in heterodimers with either TLR1 or TLR6 before stimulation by the ligand. The heterodimers form bigger oligomers in response to their corresponding ligands as well as further heterotypic associations with other receptors such as CD14 and/or CD36. Binds MYD88 (via TIR domain). Interacts with TICAM1. Interacts with CNPY3. Interacts with ATG16L1. Interacts with PPP1R11. Interacts with TICAM2. Interacts with TIRAP. In terms of processing, ubiquitinated at Lys-754 by PPP1R11, leading to its degradation. Deubiquitinated by USP2. Glycosylation of Asn-442 is critical for secretion of the N-terminal ectodomain of TLR2.

The protein localises to the membrane. It is found in the cytoplasmic vesicle. Its subcellular location is the phagosome membrane. It localises to the membrane raft. Its function is as follows. Cooperates with LY96 to mediate the innate immune response to bacterial lipoproteins and other microbial cell wall components. Cooperates with TLR1 or TLR6 to mediate the innate immune response to bacterial lipoproteins or lipopeptides. Acts via MYD88 and TRAF6, leading to NF-kappa-B activation, cytokine secretion and the inflammatory response. May also promote apoptosis in response to lipoproteins. Forms activation clusters composed of several receptors depending on the ligand, these clusters trigger signaling from the cell surface and subsequently are targeted to the Golgi in a lipid-raft dependent pathway. Forms the cluster TLR2:TLR6:CD14:CD36 in response to diacylated lipopeptides and TLR2:TLR1:CD14 in response to triacylated lipopeptides. This chain is Toll-like receptor 2 (TLR2), found in Macaca mulatta (Rhesus macaque).